The sequence spans 317 residues: Enoyl-CoA delta isomerase 3, peroxisomal (317 aa).

Positions 1-46 (MPKPGVFNFVNKATWDARNALGSLPKETARKNYVDLVSSLSSSSEA) constitute an ACB domain. A disordered region spans residues 40 to 60 (LSSSSEAPSQGKRGADEKARE). 120-124 (SGNDL) is a binding site for substrate. Residues 315–317 (AKL) carry the Microbody targeting signal motif.

Belongs to the enoyl-CoA hydratase/isomerase family. As to expression, expressed at high levels in the kidney. Also detected at very low levels in the duodenum, jejunum, ileum, heart, liver, lung, and brown adipose tissue (at protein level). In the kidney, expression seems to be localized mainly to the proximal tubule.

Its subcellular location is the peroxisome. The enzyme catalyses a (3Z)-enoyl-CoA = a 4-saturated (2E)-enoyl-CoA. It catalyses the reaction a (3E)-enoyl-CoA = a 4-saturated (2E)-enoyl-CoA. The catalysed reaction is (3E)-nonenoyl-CoA = (2E)-nonenoyl-CoA. Catalyzes the isomerization of trans-3-nonenoyl-CoA into trans-2-nonenoyl-CoA. May also have activity towards other enoyl-CoA species. The protein is Enoyl-CoA delta isomerase 3, peroxisomal of Mus musculus (Mouse).